Consider the following 214-residue polypeptide: Thiamine-phosphate synthase (214 aa).

4-amino-2-methyl-5-(diphosphooxymethyl)pyrimidine contacts are provided by residues 37-41 (QLRDK) and Asn69. Mg(2+)-binding residues include Asp70 and Asp89. Ser108 provides a ligand contact to 4-amino-2-methyl-5-(diphosphooxymethyl)pyrimidine. 134 to 136 (TDS) is a binding site for 2-[(2R,5Z)-2-carboxy-4-methylthiazol-5(2H)-ylidene]ethyl phosphate. Residue Lys137 participates in 4-amino-2-methyl-5-(diphosphooxymethyl)pyrimidine binding. 2-[(2R,5Z)-2-carboxy-4-methylthiazol-5(2H)-ylidene]ethyl phosphate contacts are provided by residues Gly167 and 187–188 (IS).

This sequence belongs to the thiamine-phosphate synthase family. Mg(2+) is required as a cofactor.

The enzyme catalyses 2-[(2R,5Z)-2-carboxy-4-methylthiazol-5(2H)-ylidene]ethyl phosphate + 4-amino-2-methyl-5-(diphosphooxymethyl)pyrimidine + 2 H(+) = thiamine phosphate + CO2 + diphosphate. The catalysed reaction is 2-(2-carboxy-4-methylthiazol-5-yl)ethyl phosphate + 4-amino-2-methyl-5-(diphosphooxymethyl)pyrimidine + 2 H(+) = thiamine phosphate + CO2 + diphosphate. It catalyses the reaction 4-methyl-5-(2-phosphooxyethyl)-thiazole + 4-amino-2-methyl-5-(diphosphooxymethyl)pyrimidine + H(+) = thiamine phosphate + diphosphate. It functions in the pathway cofactor biosynthesis; thiamine diphosphate biosynthesis; thiamine phosphate from 4-amino-2-methyl-5-diphosphomethylpyrimidine and 4-methyl-5-(2-phosphoethyl)-thiazole: step 1/1. Functionally, condenses 4-methyl-5-(beta-hydroxyethyl)thiazole monophosphate (THZ-P) and 2-methyl-4-amino-5-hydroxymethyl pyrimidine pyrophosphate (HMP-PP) to form thiamine monophosphate (TMP). In Natronomonas pharaonis (strain ATCC 35678 / DSM 2160 / CIP 103997 / JCM 8858 / NBRC 14720 / NCIMB 2260 / Gabara) (Halobacterium pharaonis), this protein is Thiamine-phosphate synthase.